A 62-amino-acid chain; its full sequence is MAKKAKGNRVQVILECTEMKDSGMPGTSRYITTKNRKNTTERLELKKYNPILKRVTVHKEIK.

Belongs to the bacterial ribosomal protein bL33 family.

The polypeptide is Large ribosomal subunit protein bL33 (Phocaeicola vulgatus (strain ATCC 8482 / DSM 1447 / JCM 5826 / CCUG 4940 / NBRC 14291 / NCTC 11154) (Bacteroides vulgatus)).